A 441-amino-acid polypeptide reads, in one-letter code: Ribulose bisphosphate carboxylase large chain (441 aa).

Asn89 and Thr139 together coordinate substrate. The active-site Proton acceptor is Lys141. Residue Lys143 participates in substrate binding. 3 residues coordinate Mg(2+): Lys167, Asp169, and Glu170. The residue at position 167 (Lys167) is an N6-carboxylysine. The active-site Proton acceptor is the His260. Substrate is bound by residues Arg261, His293, and Ser345.

It belongs to the RuBisCO large chain family. Type I subfamily. Heterohexadecamer of 8 large chains and 8 small chains; disulfide-linked. The disulfide link is formed within the large subunit homodimers. It depends on Mg(2+) as a cofactor. Post-translationally, the disulfide bond which can form in the large chain dimeric partners within the hexadecamer appears to be associated with oxidative stress and protein turnover.

It is found in the plastid. It localises to the chloroplast. It catalyses the reaction 2 (2R)-3-phosphoglycerate + 2 H(+) = D-ribulose 1,5-bisphosphate + CO2 + H2O. The enzyme catalyses D-ribulose 1,5-bisphosphate + O2 = 2-phosphoglycolate + (2R)-3-phosphoglycerate + 2 H(+). RuBisCO catalyzes two reactions: the carboxylation of D-ribulose 1,5-bisphosphate, the primary event in carbon dioxide fixation, as well as the oxidative fragmentation of the pentose substrate in the photorespiration process. Both reactions occur simultaneously and in competition at the same active site. The chain is Ribulose bisphosphate carboxylase large chain from Fouquieria splendens (Ocotillo).